A 96-amino-acid chain; its full sequence is Putative pterin-4-alpha-carbinolamine dehydratase (96 aa).

It belongs to the pterin-4-alpha-carbinolamine dehydratase family.

It catalyses the reaction (4aS,6R)-4a-hydroxy-L-erythro-5,6,7,8-tetrahydrobiopterin = (6R)-L-erythro-6,7-dihydrobiopterin + H2O. This chain is Putative pterin-4-alpha-carbinolamine dehydratase, found in Prochlorococcus marinus (strain MIT 9312).